A 425-amino-acid chain; its full sequence is Protein CLP1 homolog (425 aa).

Residues glutamate 18, lysine 59, and 121-126 (DVGKST) each bind ATP.

This sequence belongs to the Clp1 family. Clp1 subfamily.

Its subcellular location is the nucleus. Functionally, required for endonucleolytic cleavage during polyadenylation-dependent pre-mRNA 3'-end formation. This Drosophila ananassae (Fruit fly) protein is Protein CLP1 homolog (cbc).